Here is a 319-residue protein sequence, read N- to C-terminus: MWKRSFHSQGGPLRARTKFTKPKPKQPVLPKDKIRPPTQLTHHSNNLRITEPIPPTTSNLRCPDDHPLWQFFSNKKFIRSADDLPPSSHIRPWSIPELRHKSFNDLHSLWYNCLREQNVLARENHLLKNIVGSTHDEFSELSNSIRTTMWQIRHVLNERELAYSASREFLQDESERKKFLDTLANDYFLNKDIPDDEVASMLTRFQLAIFGISETIQDNTVDINFIDGIKFLANLKLQRFKDSNDLISEISQEPITDVGESFILFTSDFEPHAVQEACVAIKDLRKSPDNKVPKLDELPTVRKYLKQLIHASSVEQATA.

The tract at residues 1–55 (MWKRSFHSQGGPLRARTKFTKPKPKQPVLPKDKIRPPTQLTHHSNNLRITEPIPP) is disordered. Residues 15–24 (ARTKFTKPKP) show a composition bias toward basic residues. The segment covering 38–48 (TQLTHHSNNLR) has biased composition (polar residues).

Belongs to the universal ribosomal protein uL29 family. As to quaternary structure, component of the mitochondrial large ribosomal subunit. Mature mitochondrial ribosomes consist of a small (37S) and a large (54S) subunit. The 37S subunit contains at least 33 different proteins and 1 molecule of RNA (15S). The 54S subunit contains at least 45 different proteins and 1 molecule of RNA (21S).

It localises to the mitochondrion. The chain is Large ribosomal subunit protein uL29m (MRPL4) from Saccharomyces cerevisiae (strain YJM789) (Baker's yeast).